A 1385-amino-acid polypeptide reads, in one-letter code: DNA-directed RNA polymerase subunit beta'' (1385 aa).

Zn(2+)-binding residues include Cys220, Cys293, Cys300, and Cys303.

This sequence belongs to the RNA polymerase beta' chain family. RpoC2 subfamily. In plastids the minimal PEP RNA polymerase catalytic core is composed of four subunits: alpha, beta, beta', and beta''. When a (nuclear-encoded) sigma factor is associated with the core the holoenzyme is formed, which can initiate transcription. The cofactor is Zn(2+).

It is found in the plastid. The protein localises to the chloroplast. The enzyme catalyses RNA(n) + a ribonucleoside 5'-triphosphate = RNA(n+1) + diphosphate. In terms of biological role, DNA-dependent RNA polymerase catalyzes the transcription of DNA into RNA using the four ribonucleoside triphosphates as substrates. The chain is DNA-directed RNA polymerase subunit beta'' from Aethionema cordifolium (Lebanon stonecress).